The primary structure comprises 620 residues: MIAFTDIVGMDLAKQALMLLAVDPSLGGVVIPSTVGSGKSTLARAFADILPEGTPFVELPLNVTEDRLIGGVDLEATLASGQRVVQHGVLSKAHKGVLYVDSLSLLDSSAVSHIMDAMSRGAVIVEREGLSEVHPADFMLVGTYDPSDGEVRMGLLDRIGIIVPFTPVNDYRARKQIVSLVMGTRNEEDTQDELRMLRGIIGAAREQLHHVSITNEQIKGLIQTAISLGVEGNRVDIFAIRAAIANAALNQRTEVDDEDLKLAMKLVLVPRATRMPEREPNPEEMAQDEPPPQEEQPQDEAEDQNAPPDEADSDADEEQEETPDMIEELMMDAVETELPDNILNISLASKKKAKSGSRGEALNNKRGRFVRSQPGEIKSGKVALIPTLISAAPWQASRKAEQAKKGIKSTAALIIGKDDIKIKRFRDKSGTLFIFMVDASGSMALNRMRQAKGAVASLLQNAYVHRDQVSLISFRGKQAQVLLPPSQSVDRAKRELDVLPTGGGTPLASALLTGWETAKQARAKGITQIMFVMITDGRGNIPLGAAYDPNATKASKEELEKEVEALALSIQADGIASIVVDTQMNYLSRGEAPKLAQKLGGRYFYLPNAKAEQIVEAALS.

33-40 serves as a coordination point for ATP; it reads STVGSGKS. A disordered region spans residues 272 to 322; it reads ATRMPEREPNPEEMAQDEPPPQEEQPQDEAEDQNAPPDEADSDADEEQEET. The span at 296–322 shows a compositional bias: acidic residues; it reads QPQDEAEDQNAPPDEADSDADEEQEET. The region spanning 432 to 620 is the VWFA domain; that stretch reads LFIFMVDASG…AEQIVEAALS (189 aa).

It belongs to the Mg-chelatase subunits D/I family.

It catalyses the reaction protoporphyrin IX + Mg(2+) + ATP + H2O = Mg-protoporphyrin IX + ADP + phosphate + 3 H(+). It functions in the pathway porphyrin-containing compound metabolism; bacteriochlorophyll biosynthesis. Involved in bacteriochlorophyll biosynthesis; introduces a magnesium ion into protoporphyrin IX to yield Mg-protoporphyrin IX. The sequence is that of Magnesium-chelatase 67 kDa subunit (bchD) from Chlorobaculum tepidum (strain ATCC 49652 / DSM 12025 / NBRC 103806 / TLS) (Chlorobium tepidum).